A 460-amino-acid chain; its full sequence is Pentatricopeptide repeat-containing protein At5g43790 (460 aa).

PPR repeat units lie at residues 70 to 107 (SVFL…RSNF), 111 to 142 (NEFT…VLKF), 149 to 179 (DRFV…IREP), 180 to 214 (DLAT…QVRP), 215 to 249 (NELS…NLTL), 250 to 280 (NQFV…MSQR), 281 to 315 (DVSC…GLVP), 316 to 351 (DSAT…GIEP), and 352 to 382 (KVEH…MPVK). The interval 387 to 460 (LWRSFLGSSQ…NKSPGISTLN (74 aa)) is type E motif; degenerate.

Belongs to the PPR family. PCMP-E subfamily.

In Arabidopsis thaliana (Mouse-ear cress), this protein is Pentatricopeptide repeat-containing protein At5g43790 (PCMP-E30).